Consider the following 303-residue polypeptide: Zinc transporter ZIP9-B (303 aa).

The helical transmembrane segment at 7–27 (ISLLSLAMLVGCYVSGIIPLA) threads the bilayer. An N-linked (GlcNAc...) asparagine glycan is attached at N29. The next 5 membrane-spanning stretches (helical) occupy residues 35 to 55 (LKLV…AVIV), 102 to 122 (AYIG…DQIG), 142 to 162 (ITTT…LGAA), 172 to 192 (LIVF…LVSF), and 206 to 226 (HLLV…LGLS). The N-linked (GlcNAc...) asparagine glycan is linked to N237. The next 2 membrane-spanning stretches (helical) occupy residues 240–260 (GVAM…HVLP) and 282–302 (LEVC…IGHQ).

This sequence belongs to the ZIP transporter (TC 2.A.5) family.

The protein resides in the golgi apparatus. The protein localises to the trans-Golgi network membrane. Its subcellular location is the cell membrane. It localises to the cytoplasm. It is found in the perinuclear region. The protein resides in the mitochondrion. The protein localises to the nucleus. The catalysed reaction is Zn(2+)(in) = Zn(2+)(out). In terms of biological role, transports zinc ions across cell and organelle membranes into the cytoplasm and regulates intracellular zinc homeostasis. Participates in the zinc ions efflux out of the secretory compartments. Regulates intracellular zinc level, resulting in the enhancement of AKT1 and MAPK3/MAPK1 (Erk1/2) phosphorylation in response to the BCR activation. Also functions as a membrane androgen receptor that mediates, through a G protein, the non-classical androgen signaling pathway, characterized by the activation of MAPK3/MAPK1 (Erk1/2) and transcription factors CREB1 or ATF1. Moreover, has dual functions as a membrane-bound androgen receptor and as an androgen-dependent zinc transporter both of which are mediated through an inhibitory G protein (Gi) that mediates both MAP kinase and zinc signaling leading to the androgen-dependent apoptotic process. The chain is Zinc transporter ZIP9-B (slc39a9-b) from Xenopus laevis (African clawed frog).